Reading from the N-terminus, the 189-residue chain is Parkinson disease protein 7 homolog (189 aa).

Residue alanine 2 is modified to N-acetylalanine. 2 S-palmitoyl cysteine lipidation sites follow: cysteine 46 and cysteine 53. Residue tyrosine 67 is modified to Phosphotyrosine. Catalysis depends on cysteine 106, which acts as the Nucleophile. Residue cysteine 106 is modified to Cysteine sulfinic acid (-SO2H); alternate. Cysteine 106 is lipidated: S-palmitoyl cysteine; alternate. Histidine 126 is a catalytic residue. Residue lysine 130 forms a Glycyl lysine isopeptide (Lys-Gly) (interchain with G-Cter in SUMO) linkage. N6-acetyllysine is present on lysine 148. Lysine 182 carries the N6-succinyllysine modification.

Belongs to the peptidase C56 family. Homodimer. Binds EFCAB6/DJBP and PIAS2. Part of a ternary complex containing PARK7, EFCAB6/DJBP and AR. Interacts (via N-terminus) with OTUD7B. Interacts with BBS1, HIPK1, CLCF1 and MTERF. Forms a complex with PINK1 and PRKN. Interacts (via C-terminus) with NCF1; the interaction is enhanced by LPS and modulates NCF1 phosphorylation and membrane translocation. Interacts with NENF. Requires Deglycase activity does not require glutathione as a cofactor, however, glycated glutathione constitutes a PARK7 substrate. as cofactor. Sumoylated on Lys-130 by PIAS2 or PIAS4; which is essential for cell-growth promoting activity and transforming activity. Post-translationally, undergoes cleavage of a C-terminal peptide and subsequent activation of protease activity in response to oxidative stress. As to expression, ubiquitous. Detected on epididymal sperm. Highly expressed in testis and prostate. Detected at lower levels in heart, lung, brain, liver, kidney, seminal vesicle, caput and corpus epididymis.

The protein resides in the cell membrane. The protein localises to the cytoplasm. It localises to the membrane raft. It is found in the nucleus. Its subcellular location is the mitochondrion. The protein resides in the endoplasmic reticulum. The enzyme catalyses N(omega)-(1-hydroxy-2-oxopropyl)-L-arginyl-[protein] + H2O = lactate + L-arginyl-[protein] + H(+). The catalysed reaction is N(6)-(1-hydroxy-2-oxopropyl)-L-lysyl-[protein] + H2O = lactate + L-lysyl-[protein] + H(+). It catalyses the reaction S-(1-hydroxy-2-oxopropyl)-L-cysteinyl-[protein] + H2O = lactate + L-cysteinyl-[protein] + H(+). It carries out the reaction N(omega)-(1-hydroxy-2-oxoethyl)-L-arginyl-[protein] + H2O = L-arginyl-[protein] + glycolate + H(+). The enzyme catalyses N(6)-(1-hydroxy-2-oxoethyl)-L-lysyl-[protein] + H2O = glycolate + L-lysyl-[protein] + H(+). The catalysed reaction is S-(1-hydroxy-2-oxoethyl)-L-cysteinyl-[protein] + H2O = glycolate + L-cysteinyl-[protein] + H(+). It catalyses the reaction N(2)-(1-hydroxy-2-oxopropyl)-dGTP + H2O = lactate + dGTP + H(+). It carries out the reaction N(2)-(1-hydroxy-2-oxopropyl)-GTP + H2O = lactate + GTP + H(+). The enzyme catalyses N(2)-(1-hydroxy-2-oxopropyl)-GDP + H2O = lactate + GDP + H(+). The catalysed reaction is N(2)-(1-hydroxy-2-oxopropyl)-GMP + H2O = lactate + GMP + H(+). It catalyses the reaction N(2)-(1-hydroxy-2-oxoethyl)-dGTP + H2O = dGTP + glycolate + H(+). It carries out the reaction N(2)-(1-hydroxy-2-oxoethyl)-GTP + H2O = glycolate + GTP + H(+). The enzyme catalyses N(2)-(1-hydroxy-2-oxoethyl)-GDP + H2O = glycolate + GDP + H(+). The catalysed reaction is N(2)-(1-hydroxy-2-oxoethyl)-GMP + H2O = glycolate + GMP + H(+). It catalyses the reaction an N(2)-(1-hydroxy-2-oxopropyl)-guanosine in RNA + H2O = a guanosine in RNA + lactate + H(+). It carries out the reaction an N(2)-(1-hydroxy-2-oxopropyl)-2'-deoxyguanosine in DNA + H2O = a 2'-deoxyguanosine in DNA + lactate + H(+). The enzyme catalyses an N(2)-(1-hydroxy-2-oxoethyl)-guanosine in RNA + H2O = a guanosine in RNA + glycolate + H(+). The catalysed reaction is an N(2)-(1-hydroxy-2-oxoethyl)-2'-deoxyguanosine in DNA + H2O = a 2'-deoxyguanosine in DNA + glycolate + H(+). Functionally, protein and nucleotide deglycase that catalyzes the deglycation of the Maillard adducts formed between amino groups of proteins or nucleotides and reactive carbonyl groups of glyoxals. Thus, functions as a protein deglycase that repairs methylglyoxal- and glyoxal-glycated proteins, and releases repaired proteins and lactate or glycolate, respectively. Deglycates cysteine, arginine and lysine residues in proteins, and thus reactivates these proteins by reversing glycation by glyoxals. Acts on early glycation intermediates (hemithioacetals and aminocarbinols), preventing the formation of advanced glycation endproducts (AGE) that cause irreversible damage. Also functions as a nucleotide deglycase able to repair glycated guanine in the free nucleotide pool (GTP, GDP, GMP, dGTP) and in DNA and RNA. Is thus involved in a major nucleotide repair system named guanine glycation repair (GG repair), dedicated to reversing methylglyoxal and glyoxal damage via nucleotide sanitization and direct nucleic acid repair. Also displays an apparent glyoxalase activity that in fact reflects its deglycase activity. Plays an important role in cell protection against oxidative stress and cell death acting as oxidative stress sensor and redox-sensitive chaperone and protease; functions probably related to its primary function. It is involved in neuroprotective mechanisms like the stabilization of NFE2L2 and PINK1 proteins, male fertility as a positive regulator of androgen signaling pathway as well as cell growth and transformation through, for instance, the modulation of NF-kappa-B signaling pathway. Eliminates hydrogen peroxide and protects cells against hydrogen peroxide-induced cell death. Required for correct mitochondrial morphology and function as well as for autophagy of dysfunctional mitochondria. Plays a role in regulating expression or stability of the mitochondrial uncoupling proteins SLC25A14 and SLC25A27 in dopaminergic neurons of the substantia nigra pars compacta and attenuates the oxidative stress induced by calcium entry into the neurons via L-type channels during pacemaking. Regulates astrocyte inflammatory responses, may modulate lipid rafts-dependent endocytosis in astrocytes and neuronal cells. In pancreatic islets, involved in the maintenance of mitochondrial reactive oxygen species (ROS) levels and glucose homeostasis in an age- and diet dependent manner. Protects pancreatic beta cells from cell death induced by inflammatory and cytotoxic setting. Binds to a number of mRNAs containing multiple copies of GG or CC motifs and partially inhibits their translation but dissociates following oxidative stress. Metal-binding protein able to bind copper as well as toxic mercury ions, enhances the cell protection mechanism against induced metal toxicity. In macrophages, interacts with the NADPH oxidase subunit NCF1 to direct NADPH oxidase-dependent ROS production, and protects against sepsis. This chain is Parkinson disease protein 7 homolog, found in Rattus norvegicus (Rat).